Here is a 731-residue protein sequence, read N- to C-terminus: Auxin response factor 3 (731 aa).

Over residues 1-22 (MASSASSSSSPSSRPPLMALPS) the composition is skewed to low complexity. Residues 1-41 (MASSASSSSSPSSRPPLMALPSFYRPPWPSERGGEQRATDC) form a disordered region. The TF-B3 DNA-binding region spans 191 to 293 (FCKTLTASDT…ELRLGVRRAT (103 aa)).

The protein belongs to the ARF family. In terms of assembly, homo and heterodimers. In terms of tissue distribution, expressed in roots, culms, leaves and young panicles.

It is found in the nucleus. Auxin response factors (ARFs) are transcriptional factors that bind specifically to the DNA sequence 5'-TGTCTC-3' found in the auxin-responsive promoter elements (AuxREs). This is Auxin response factor 3 (ARF3) from Oryza sativa subsp. japonica (Rice).